A 73-amino-acid chain; its full sequence is Tetrahydromethanopterin S-methyltransferase subunit G (73 aa).

Residues 48–68 form a helical membrane-spanning segment; it reads IGILYGAVVGLLLFLIYVSVS.

Belongs to the MtrG family. In terms of assembly, the complex is composed of 8 subunits; MtrA, MtrB, MtrC, MtrD, MtrE, MtrF, MtrG and MtrH.

The protein localises to the cell membrane. The catalysed reaction is 5-methyl-5,6,7,8-tetrahydromethanopterin + coenzyme M + 2 Na(+)(in) = 5,6,7,8-tetrahydromethanopterin + methyl-coenzyme M + 2 Na(+)(out). The protein operates within one-carbon metabolism; methanogenesis from CO(2); methyl-coenzyme M from 5,10-methylene-5,6,7,8-tetrahydromethanopterin: step 2/2. Functionally, part of a complex that catalyzes the formation of methyl-coenzyme M and tetrahydromethanopterin from coenzyme M and methyl-tetrahydromethanopterin. This is an energy-conserving, sodium-ion translocating step. In Methanosarcina acetivorans (strain ATCC 35395 / DSM 2834 / JCM 12185 / C2A), this protein is Tetrahydromethanopterin S-methyltransferase subunit G.